The primary structure comprises 436 residues: Protein GOLM2 (436 aa).

N-acetylmethionine is present on Met1. Topologically, residues 1-14 (MVGFGANRRAGRLP) are cytoplasmic. A helical; Signal-anchor for type II membrane protein transmembrane segment spans residues 15-35 (SLVLVVLLVVIVVLAFNYWSI). A coiled-coil region spans residues 35–198 (ISSRHVLLQE…EEQKQETQKI (164 aa)). Topologically, residues 36–436 (SSRHVLLQEE…YGKQHFNDVL (401 aa)) are lumenal. Positions 225–247 (ADKNEEPSSNHIPHGKEQIKRGG) are enriched in basic and acidic residues. Residues 225-436 (ADKNEEPSSN…YGKQHFNDVL (212 aa)) form a disordered region. Phosphoserine is present on residues Ser233 and Ser275. The segment covering 305–321 (NHNGNPGTSKQNPSSPL) has biased composition (polar residues). Phosphoserine occurs at positions 328 and 332. Basic and acidic residues predominate over residues 344–362 (ATKDRVSDFHKLKQSRFFD). Phosphoserine is present on Ser366. Residues 399-418 (YNEEEDGDGGEEDVQDDEER) are compositionally biased toward acidic residues. Over residues 426–436 (DYGKQHFNDVL) the composition is skewed to basic and acidic residues.

This sequence belongs to the GOLM family.

The protein localises to the membrane. This is Protein GOLM2 from Homo sapiens (Human).